Consider the following 476-residue polypeptide: Cysteine--tRNA ligase (476 aa).

Cys27 is a Zn(2+) binding site. A 'HIGH' region motif is present at residues 29 to 39 (ITPYDSVHVGH). Zn(2+) is bound by residues Cys213, His238, and Glu242. The short motif at 271-275 (KMSKS) is the 'KMSKS' region element. Position 274 (Lys274) interacts with ATP.

Belongs to the class-I aminoacyl-tRNA synthetase family. It depends on Zn(2+) as a cofactor.

The protein resides in the cytoplasm. It carries out the reaction tRNA(Cys) + L-cysteine + ATP = L-cysteinyl-tRNA(Cys) + AMP + diphosphate. The sequence is that of Cysteine--tRNA ligase from Pyrobaculum arsenaticum (strain DSM 13514 / JCM 11321 / PZ6).